Consider the following 572-residue polypeptide: MNSALAAGLQIGFVILALAIAYVPLGDYMARVFTGPHSLRASGLSTIKHSRVERLIYRVGRVDPETEQTWVGYTLSLLGFSFASVIFLYVLQRIQGVLPLSGGLGAVSPAVAFNTAVSFVTNTNWQSYTPETTMSNLTQMVGLAVQNFVSAAVGLTVAVALIRGVVRTTSGGELGNFWVDLVRGSLRILLPLSFAVALILLSQGTIQSVYTHFEATALDGTAQHIALAPVASQEAIKEIGTNGGGILGANSAHPFENPTPLSNVIEILAILIIPVCLTRTYSTMVGDKRQGLTVLSVMGTLFGGMLALVTWAESSPRGIAAQAAGAMMEGKEVRFGIPGSALFAVSTTGTSTGAVDAAHDSFTAAGGGALILNMLLGEIAPGGVGTGLYGILVLAIIAVFVGGLLVGRTPEFLGKKIGRRQITMAALSVLVMPALVLVGTGISVALSTTTGYQGNSGDPGTPSSIHGFSEVLYAYASAANNNGSAFGGLTVTSHWFQASLGMAMLLGRFLPIIFTLALAGSLATQRKTPASAGTLHTHGPMFAGLHTGTVLLVAALTFFPALALGPIAEAVL.

The next 11 membrane-spanning stretches (helical) occupy residues 5–25, 71–91, 97–117, 142–162, 188–208, 258–278, 292–312, 387–407, 422–442, 500–520, and 548–568; these read LAAG…YVPL, VGYT…LYVL, VLPL…NTAV, GLAV…VALI, ILLP…TIQS, PTPL…VCLT, LTVL…VTWA, GLYG…LLVG, ITMA…GTGI, LGMA…ALAG, and GTVL…GPIA.

This sequence belongs to the KdpA family. In terms of assembly, the system is composed of three essential subunits: KdpA, KdpB and KdpC.

Its subcellular location is the cell membrane. In terms of biological role, part of the high-affinity ATP-driven potassium transport (or Kdp) system, which catalyzes the hydrolysis of ATP coupled with the electrogenic transport of potassium into the cytoplasm. This subunit binds the extracellular potassium ions and delivers the ions to the membrane domain of KdpB through an intramembrane tunnel. The protein is Potassium-transporting ATPase potassium-binding subunit of Mycobacteroides abscessus (strain ATCC 19977 / DSM 44196 / CCUG 20993 / CIP 104536 / JCM 13569 / NCTC 13031 / TMC 1543 / L948) (Mycobacterium abscessus).